We begin with the raw amino-acid sequence, 638 residues long: Growth hormone receptor (638 aa).

The N-terminal stretch at 1–18 (MDLWQLLLTLALAGSSDA) is a signal peptide. Residues 19-264 (FSGSEPTAAI…NQFTCEEDFY (246 aa)) are Extracellular-facing. N46 carries an N-linked (GlcNAc...) asparagine glycan. Disulfide bonds link C56/C66 and C101/C112. An N-linked (GlcNAc...) asparagine glycan is attached at N115. A disulfide bridge links C126 with C140. One can recognise a Fibronectin type-III domain in the interval 151-254 (PPIALNWTLL…EVLYVTLPQM (104 aa)). N-linked (GlcNAc...) asparagine glycans are attached at residues N156, N161, and N200. The short motif at 240–244 (YGEFS) is the WSXWS motif element. The helical transmembrane segment at 265–288 (FPWLLIIIFGIFGLTVMLFVFLFS) threads the bilayer. Topologically, residues 289-638 (KQQRIKMLIL…STDQLNKIMP (350 aa)) are cytoplasmic. Residues 294–379 (KMLILPPVPV…HQKSHSNLGV (86 aa)) form a required for JAK2 binding region. A Box 1 motif motif is present at residues 297–305 (ILPPVPVPK). The UbE motif signature appears at 340-349 (DSWVEFIELD). Phosphoserine is present on S341. The interval 353 to 388 (PDEKNEGSDTDRLLSSDHQKSHSNLGVKDGDSGRTS) is disordered. Basic and acidic residues predominate over residues 356 to 372 (KNEGSDTDRLLSSDHQK). 2 positions are modified to phosphotyrosine: Y487 and Y595.

Belongs to the type I cytokine receptor family. Type 1 subfamily. On growth hormone (GH) binding, forms homodimers and binds JAK2 via a box 1-containing domain. In terms of processing, the soluble form (GHBP) is produced by phorbol ester-promoted proteolytic cleavage at the cell surface (shedding) by ADAM17/TACE. Shedding is inhibited by growth hormone (GH) binding to the receptor probably due to a conformational change in GHR rendering the receptor inaccessible to ADAM17. Post-translationally, on GH binding, phosphorylated on tyrosine residues in the cytoplasmic domain by JAK2. Ubiquitinated by the ECS(SOCS2) complex following ligand-binding and phosphorylation by JAK2, leading to its degradation by the proteasome. Regulation by the ECS(SOCS2) complex acts as a negative feedback loop of growth hormone receptor signaling. Ubiquitination is not sufficient for GHR internalization.

It is found in the cell membrane. Its subcellular location is the secreted. Functionally, receptor for pituitary gland growth hormone (GH1) involved in regulating postnatal body growth. On ligand binding, couples to the JAK2/STAT5 pathway. Its function is as follows. The soluble form (GHBP) acts as a reservoir of growth hormone in plasma and may be a modulator/inhibitor of GH signaling. The chain is Growth hormone receptor (GHR) from Papio anubis (Olive baboon).